The sequence spans 191 residues: Potassium-transporting ATPase KdpC subunit (191 aa).

A helical transmembrane segment spans residues 6–26 (PAILLFILLTLVTGGLYPLLT).

The protein belongs to the KdpC family. In terms of assembly, the system is composed of three essential subunits: KdpA, KdpB and KdpC.

Its subcellular location is the cell inner membrane. Its function is as follows. Part of the high-affinity ATP-driven potassium transport (or Kdp) system, which catalyzes the hydrolysis of ATP coupled with the electrogenic transport of potassium into the cytoplasm. This subunit acts as a catalytic chaperone that increases the ATP-binding affinity of the ATP-hydrolyzing subunit KdpB by the formation of a transient KdpB/KdpC/ATP ternary complex. This chain is Potassium-transporting ATPase KdpC subunit, found in Enterobacter sp. (strain 638).